A 152-amino-acid polypeptide reads, in one-letter code: Putative pre-16S rRNA nuclease (152 aa).

Belongs to the YqgF nuclease family.

The protein localises to the cytoplasm. Functionally, could be a nuclease involved in processing of the 5'-end of pre-16S rRNA. The chain is Putative pre-16S rRNA nuclease from Synechocystis sp. (strain ATCC 27184 / PCC 6803 / Kazusa).